A 299-amino-acid polypeptide reads, in one-letter code: CCR4-NOT transcription complex subunit 9 (299 aa).

Position 1 is an N-acetylmethionine (M1).

It belongs to the CNOT9 family. Homodimer. Component of the CCR4-NOT complex; distinct complexes seem to exist that differ in the participation of probably mutually exclusive catalytic subunits. Interacts with MYB, ATF2, RARA, RARB, RARG, RXRA, RXRB and RXRG. Identified in a complex with ATF2 bound to target DNA. Interacts with NANOS2. Directly interacts with ZNF335. As to expression, detected in spleen, thymus, prostate, testis, ovary and intestine.

The protein resides in the nucleus. It localises to the cytoplasm. It is found in the P-body. In terms of biological role, component of the CCR4-NOT complex which is one of the major cellular mRNA deadenylases and is linked to various cellular processes including bulk mRNA degradation, miRNA-mediated repression, translational repression during translational initiation and general transcription regulation. Additional complex functions may be a consequence of its influence on mRNA expression. Involved in down-regulation of MYB- and JUN-dependent transcription. May play a role in cell differentiation. Can bind oligonucleotides, such as poly-G, poly-C or poly-T (in vitro), but the physiological relevance of this is not certain. Does not bind poly-A. Enhances ligand-dependent transcriptional activity of nuclear hormone receptors, including RARA, expect ESR1-mediated transcription that is not only slightly increased, if at all. This Homo sapiens (Human) protein is CCR4-NOT transcription complex subunit 9.